The following is an 822-amino-acid chain: DNA-directed RNA polymerase subunit beta N-terminal section (822 aa).

The tract at residues 376–408 (ELTEGNPSSKSQTKNKTSASKKSKTLNVANTKG) is disordered. The span at 383 to 393 (SSKSQTKNKTS) shows a compositional bias: low complexity.

This sequence belongs to the RNA polymerase beta chain family. As to quaternary structure, in plastids the minimal PEP RNA polymerase catalytic core is composed of four subunits: alpha, beta, beta', and beta''. When a (nuclear-encoded) sigma factor is associated with the core the holoenzyme is formed, which can initiate transcription.

The protein localises to the plastid. It is found in the chloroplast. It carries out the reaction RNA(n) + a ribonucleoside 5'-triphosphate = RNA(n+1) + diphosphate. Its function is as follows. DNA-dependent RNA polymerase catalyzes the transcription of DNA into RNA using the four ribonucleoside triphosphates as substrates. The chain is DNA-directed RNA polymerase subunit beta N-terminal section (rpoB1) from Chlamydomonas reinhardtii (Chlamydomonas smithii).